A 481-amino-acid chain; its full sequence is Delta(14)-sterol reductase ERG24B (481 aa).

8 helical membrane passes run 11-31 (FGGPLGATGIVFGLPILMQVL), 80-100 (LFAYYFLSLMLYRIMPAQIVL), 125-145 (LTGCAIGTYIYGANFPVWTWI), 149-169 (YIQLLTTSTVLTYIISIWTYL), 244-264 (TYGFVSDSIVVIALIQAYYVL), 279-299 (ITSDGLGFMLTWGDIVWVPFL), 313-333 (HLGPIGVGAIGTVFCIGLYIF), and 427-447 (AAPWGMLFTYLYSAWFGFLLI).

It belongs to the ERG4/ERG24 family.

It localises to the endoplasmic reticulum membrane. The catalysed reaction is 4,4-dimethyl-5alpha-cholesta-8,24-dien-3beta-ol + NADP(+) = 4,4-dimethyl-5alpha-cholesta-8,14,24-trien-3beta-ol + NADPH + H(+). It functions in the pathway steroid metabolism; ergosterol biosynthesis. Delta(14)-sterol reductase; part of the third module of ergosterol biosynthesis pathway that includes the late steps of the pathway. Catalyzes the reduction of the C14=C15 double bond within 4,4,24-trimethyl ergosta-8,14,24(28)-trienolto produce 4,4-dimethylfecosterol. The third module or late pathway involves the ergosterol synthesis itself through consecutive reactions that mainly occur in the endoplasmic reticulum (ER) membrane. Firstly, the squalene synthase ERG9 catalyzes the condensation of 2 farnesyl pyrophosphate moieties to form squalene, which is the precursor of all steroids. Squalene synthase is crucial for balancing the incorporation of farnesyl diphosphate (FPP) into sterol and nonsterol isoprene synthesis. Secondly, squalene is converted into lanosterol by the consecutive action of the squalene epoxidase ERG1 and the lanosterol synthase ERG7. Then, the delta(24)-sterol C-methyltransferase ERG6 methylates lanosterol at C-24 to produce eburicol. Eburicol is the substrate of the sterol 14-alpha demethylase encoded by CYP51A, CYP51B and CYP51C, to yield 4,4,24-trimethyl ergosta-8,14,24(28)-trienol. CYP51B encodes the enzyme primarily responsible for sterol 14-alpha-demethylation, and plays an essential role in ascospore formation. CYP51A encodes an additional sterol 14-alpha-demethylase, induced on ergosterol depletion and responsible for the intrinsic variation in azole sensitivity. The third CYP51 isoform, CYP51C, does not encode a sterol 14-alpha-demethylase, but is required for full virulence on host wheat ears. The C-14 reductase ERG24 then reduces the C14=C15 double bond which leads to 4,4-dimethylfecosterol. A sequence of further demethylations at C-4, involving the C-4 demethylation complex containing the C-4 methylsterol oxidases ERG25, the sterol-4-alpha-carboxylate 3-dehydrogenase ERG26 and the 3-keto-steroid reductase ERG27, leads to the production of fecosterol via 4-methylfecosterol. ERG28 has a role as a scaffold to help anchor ERG25, ERG26 and ERG27 to the endoplasmic reticulum. The C-8 sterol isomerase ERG2 then catalyzes the reaction which results in unsaturation at C-7 in the B ring of sterols and thus converts fecosterol to episterol. The sterol-C5-desaturases ERG3A and ERG3BB then catalyze the introduction of a C-5 double bond in the B ring to produce 5-dehydroepisterol. The C-22 sterol desaturases ERG5A and ERG5B further convert 5-dehydroepisterol into ergosta-5,7,22,24(28)-tetraen-3beta-ol by forming the C-22(23) double bond in the sterol side chain. Finally, ergosta-5,7,22,24(28)-tetraen-3beta-ol is substrate of the C-24(28) sterol reductase ERG4 to produce ergosterol. This Gibberella zeae (strain ATCC MYA-4620 / CBS 123657 / FGSC 9075 / NRRL 31084 / PH-1) (Wheat head blight fungus) protein is Delta(14)-sterol reductase ERG24B.